A 546-amino-acid polypeptide reads, in one-letter code: Probable zinc metalloprotease EGY2, chloroplastic (546 aa).

The N-terminal 64 residues, 1 to 64 (MQLPAMSCSP…QIRNRRFVCQ (64 aa)), are a transit peptide targeting the chloroplast. A disordered region spans residues 67 to 143 (TETEPDGDGN…DATPASDAQE (77 aa)). Positions 69 to 86 (TEPDGDGNGDEEKEELGD) are enriched in acidic residues. Composition is skewed to polar residues over residues 89–110 (SSPS…TNAD) and 118–130 (NTEP…TVQN). 7 helical membrane-spanning segments follow: residues 257–277 (AVPE…TLLL), 301–321 (VYGA…HILA), 326–346 (GIKL…FGAI), 364–384 (AAGP…GFIL), 427–447 (PLVL…IPAG), 474–494 (LLGI…LIFF), and 514–534 (YISI…PYPF).

The protein belongs to the peptidase M50B family.

Its subcellular location is the plastid. The protein localises to the chloroplast membrane. Probable membrane-associated metalloprotease that may be involved in chloroplast development. This Oryza sativa subsp. japonica (Rice) protein is Probable zinc metalloprotease EGY2, chloroplastic (EGY2).